Consider the following 130-residue polypeptide: Small ribosomal subunit protein uS11c (130 aa).

The protein belongs to the universal ribosomal protein uS11 family. Part of the 30S ribosomal subunit.

It localises to the plastid. It is found in the chloroplast. This Chlorokybus atmophyticus (Soil alga) protein is Small ribosomal subunit protein uS11c.